The following is a 552-amino-acid chain: Undecaprenyl phosphate-alpha-4-amino-4-deoxy-L-arabinose arabinosyl transferase (552 aa).

Transmembrane regions (helical) follow at residues 4 to 24 (IAGW…PLPG), 81 to 101 (FAVR…VFWL), 113 to 133 (VVAV…SYAV), 176 to 196 (FMTK…PWVI), 207 to 227 (FGPL…LAIA), 255 to 275 (APFW…LGLL), 289 to 309 (QGGD…FSIA), 313 to 333 (LPTY…GYVQ), 351 to 371 (LLVG…WGIT), 384 to 404 (VILG…SLYH), and 411 to 431 (WSAA…PQQV).

The protein belongs to the glycosyltransferase 83 family.

It localises to the cell inner membrane. The catalysed reaction is 4-amino-4-deoxy-alpha-L-arabinopyranosyl di-trans,octa-cis-undecaprenyl phosphate + lipid IVA = lipid IIA + di-trans,octa-cis-undecaprenyl phosphate.. It participates in lipopolysaccharide metabolism; 4-amino-4-deoxy-beta-L-arabinose-lipid A biosynthesis. Its function is as follows. Catalyzes the transfer of the L-Ara4N moiety of the glycolipid undecaprenyl phosphate-alpha-L-Ara4N to lipid A. The modified arabinose is attached to lipid A and is required for resistance to polymyxin and cationic antimicrobial peptides. This Edwardsiella ictaluri (strain 93-146) protein is Undecaprenyl phosphate-alpha-4-amino-4-deoxy-L-arabinose arabinosyl transferase.